We begin with the raw amino-acid sequence, 727 residues long: LIM domain-binding protein 3 (727 aa).

Residues 1 to 84 (MSYSVTLTGP…NLSLTLQKSK (84 aa)) enclose the PDZ domain. 3 positions are modified to phosphoserine: S44, S121, and S123. Residues 86–197 (PIPISTTAPP…GSSQPRQYNN (112 aa)) are disordered. Residues 140–156 (PTFSPAFSRPSAFSSLA) are compositionally biased toward low complexity. Over residues 188–197 (GSSQPRQYNN) the composition is skewed to polar residues. The residue at position 217 (S217) is a Phosphoserine. R219 is modified (omega-N-methylarginine). S223 bears the Phosphoserine mark. Disordered regions lie at residues 284-440 (TEFM…YTPS) and 472-529 (APSV…PQVP). The segment covering 312-385 (ATTPLLPASA…SAPATHTSYS (74 aa)) has biased composition (low complexity). Over residues 428–440 (PYTPSPAPAYTPS) the composition is skewed to pro residues. A compositionally biased stretch (polar residues) spans 494–513 (DSFSQKFAPGKSTTSISKQT). R516 and R533 each carry omega-N-methylarginine. LIM zinc-binding domains follow at residues 549–607 (PLCG…QFFA), 608–667 (PLCA…LFST), and 668–727 (KCHG…TINL).

As to quaternary structure, interacts via its LIM domains with various PKC isoforms. Interacts via its PDZ domain with the ACTN2 C-terminal region. Interacts with MYOZ1, MYOZ2 and MYOZ3. In terms of tissue distribution, expressed primarily in skeletal muscle and to a lesser extent in heart. Also detected in brain and placenta.

The protein resides in the cytoplasm. The protein localises to the perinuclear region. Its subcellular location is the cell projection. It localises to the pseudopodium. It is found in the cytoskeleton. The protein resides in the myofibril. The protein localises to the sarcomere. Its subcellular location is the z line. May function as an adapter in striated muscle to couple protein kinase C-mediated signaling via its LIM domains to the cytoskeleton. This chain is LIM domain-binding protein 3, found in Homo sapiens (Human).